The following is a 120-amino-acid chain: NAD(P)H-quinone oxidoreductase subunit 3, chloroplastic (120 aa).

3 helical membrane-spanning segments follow: residues 9–29 (IFWA…LISG), 64–84 (MFAL…PWAM), and 88–108 (VLGV…ILGL).

This sequence belongs to the complex I subunit 3 family. As to quaternary structure, NDH is composed of at least 16 different subunits, 5 of which are encoded in the nucleus.

It localises to the plastid. It is found in the chloroplast thylakoid membrane. It carries out the reaction a plastoquinone + NADH + (n+1) H(+)(in) = a plastoquinol + NAD(+) + n H(+)(out). The catalysed reaction is a plastoquinone + NADPH + (n+1) H(+)(in) = a plastoquinol + NADP(+) + n H(+)(out). NDH shuttles electrons from NAD(P)H:plastoquinone, via FMN and iron-sulfur (Fe-S) centers, to quinones in the photosynthetic chain and possibly in a chloroplast respiratory chain. The immediate electron acceptor for the enzyme in this species is believed to be plastoquinone. Couples the redox reaction to proton translocation, and thus conserves the redox energy in a proton gradient. This is NAD(P)H-quinone oxidoreductase subunit 3, chloroplastic from Arabidopsis thaliana (Mouse-ear cress).